The sequence spans 393 residues: Acetate kinase (393 aa).

Residue asparagine 8 participates in Mg(2+) binding. Lysine 15 is a binding site for ATP. A substrate-binding site is contributed by arginine 91. Aspartate 148 (proton donor/acceptor) is an active-site residue. ATP-binding positions include 206–210 (HLGSG), 280–282 (DMR), and 325–329 (GVGEN). Glutamate 376 serves as a coordination point for Mg(2+).

Belongs to the acetokinase family. Homodimer. Mg(2+) is required as a cofactor. Mn(2+) serves as cofactor.

Its subcellular location is the cytoplasm. It catalyses the reaction acetate + ATP = acetyl phosphate + ADP. It participates in metabolic intermediate biosynthesis; acetyl-CoA biosynthesis; acetyl-CoA from acetate: step 1/2. Functionally, catalyzes the formation of acetyl phosphate from acetate and ATP. Can also catalyze the reverse reaction. This is Acetate kinase from Rhizobium meliloti (Ensifer meliloti).